The chain runs to 276 residues: Phosducin-like protein 1 (276 aa).

A phosphoserine mark is found at Ser18, Ser19, Ser20, and Ser42. Residues 18-74 (SSSEGEDNGDEGGDNKGASGKSRCSGLTIDTNPDATPAGGFRQQSSTNTGPKGVVKD) are disordered. One can recognise a Phosducin domain in the interval 62-272 (SSTNTGPKGV…LIEHGIIVDR (211 aa)). The segment at 153–276 (FGQVQQLTSH…GIIVDRALYN (124 aa)) is thioredoxin fold.

Belongs to the phosducin family. Forms a complex with the beta and gamma subunits of the GTP-binding proteins. Interacts with the CCT chaperonin complex.

In terms of biological role, functions as a co-chaperone for CCT in the assembly of heterotrimeric G protein complexes, facilitates the assembly of both Gbeta-Ggamma and RGS-Gbeta5 heterodimers. In Drosophila melanogaster (Fruit fly), this protein is Phosducin-like protein 1.